A 173-amino-acid chain; its full sequence is Nucleoside-triphosphatase THEP1 (173 aa).

Residues 9 to 16 and 97 to 104 contribute to the ATP site; these read GPPGVGKT and LYVIDEVG.

The protein belongs to the THEP1 NTPase family.

The catalysed reaction is a ribonucleoside 5'-triphosphate + H2O = a ribonucleoside 5'-diphosphate + phosphate + H(+). Functionally, has nucleotide phosphatase activity towards ATP, GTP, CTP, TTP and UTP. May hydrolyze nucleoside diphosphates with lower efficiency. The polypeptide is Nucleoside-triphosphatase THEP1 (Caldivirga maquilingensis (strain ATCC 700844 / DSM 13496 / JCM 10307 / IC-167)).